A 210-amino-acid polypeptide reads, in one-letter code: Peptidyl-tRNA hydrolase (210 aa).

Residue tyrosine 15 participates in tRNA binding. Histidine 20 functions as the Proton acceptor in the catalytic mechanism. TRNA contacts are provided by phenylalanine 66, asparagine 68, and asparagine 114. Positions 186–210 are disordered; that stretch reads IHTSKPPRPKPPRREPGDGGTPATA.

Belongs to the PTH family. Monomer.

It is found in the cytoplasm. It carries out the reaction an N-acyl-L-alpha-aminoacyl-tRNA + H2O = an N-acyl-L-amino acid + a tRNA + H(+). In terms of biological role, hydrolyzes ribosome-free peptidyl-tRNAs (with 1 or more amino acids incorporated), which drop off the ribosome during protein synthesis, or as a result of ribosome stalling. Its function is as follows. Catalyzes the release of premature peptidyl moieties from peptidyl-tRNA molecules trapped in stalled 50S ribosomal subunits, and thus maintains levels of free tRNAs and 50S ribosomes. The chain is Peptidyl-tRNA hydrolase from Variovorax paradoxus (strain S110).